A 197-amino-acid polypeptide reads, in one-letter code: Ribonuclease HII (197 aa).

Residues 9–197 (KLIAGVDEVG…APVKKALEQF (189 aa)) enclose the RNase H type-2 domain. 3 residues coordinate a divalent metal cation: Asp-15, Glu-16, and Asp-107.

It belongs to the RNase HII family. It depends on Mn(2+) as a cofactor. Mg(2+) serves as cofactor.

It is found in the cytoplasm. It catalyses the reaction Endonucleolytic cleavage to 5'-phosphomonoester.. Its function is as follows. Endonuclease that specifically degrades the RNA of RNA-DNA hybrids. This is Ribonuclease HII from Haemophilus influenzae (strain PittEE).